Consider the following 451-residue polypeptide: PTS system galactose-specific EIIC component (451 aa).

Residues 8–427 (LNKTLMPLAS…VLNVLIYYPF (420 aa)) enclose the PTS EIIC type-3 domain. A run of 11 helical transmembrane segments spans residues 40 to 60 (LGIA…VDFL), 69 to 89 (FSAV…YNFA), 104 to 124 (GLLS…VPVV), 151 to 171 (TGST…LVYI), 190 to 210 (VVDS…MFGI), 239 to 259 (ANPW…FFGI), 263 to 283 (LIGG…IDAY), 296 to 316 (IVFA…GLVI), 332 to 352 (LGAI…LPMM), 356 to 376 (LFFI…LGLA), and 403 to 423 (ISGG…NVLI).

The protein resides in the cell membrane. Its function is as follows. The phosphoenolpyruvate-dependent sugar phosphotransferase system (PTS), a major carbohydrate active transport system, catalyzes the phosphorylation of incoming sugar substrates concomitant with their translocation across the cell membrane. Involved in galactose transport with PtcA and PtcB. The chain is PTS system galactose-specific EIIC component from Lactococcus lactis subsp. cremoris (strain MG1363).